Here is a 268-residue protein sequence, read N- to C-terminus: Tryptophan synthase alpha chain (268 aa).

Active-site proton acceptor residues include Glu-49 and Asp-60.

It belongs to the TrpA family. As to quaternary structure, tetramer of two alpha and two beta chains.

The enzyme catalyses (1S,2R)-1-C-(indol-3-yl)glycerol 3-phosphate + L-serine = D-glyceraldehyde 3-phosphate + L-tryptophan + H2O. Its pathway is amino-acid biosynthesis; L-tryptophan biosynthesis; L-tryptophan from chorismate: step 5/5. Functionally, the alpha subunit is responsible for the aldol cleavage of indoleglycerol phosphate to indole and glyceraldehyde 3-phosphate. This chain is Tryptophan synthase alpha chain, found in Mannheimia succiniciproducens (strain KCTC 0769BP / MBEL55E).